Consider the following 908-residue polypeptide: Mycobactin import ATP-binding/permease protein IrtA (908 aa).

The Cytoplasmic portion of the chain corresponds to 1-329; that stretch reads MARGFQGVML…SRLLAPLKKP (329 aa). The FAD-binding FR-type domain occupies 15-124; sequence ARDHQATVVD…MGSRGFSVPE (110 aa). Residues 16 to 245 are siderophore interaction domain; that stretch reads RDHQATVVDK…AQAYWTEGRA (230 aa). FAD contacts are provided by residues 70-73, 87-91, 97-98, and 241-243; these read RAYT, DMVLH, AS, and TEG. The disordered stretch occupies residues 245 to 311; that stretch reads AMGSSRGETS…GAAQPRTPVR (67 aa). Residues 253 to 309 show a composition bias toward low complexity; sequence TSTPAKPAAKTAPAKAAAKPAAASGAGTPEHAAAPAAATTGAPQAAPAPGAAQPRTP. Residues 330-350 traverse the membrane as a helical segment; it reads LIVSGVLQALITLIELAPFVL. Residues 331–613 form the ABC transmembrane type-1 domain; it reads IVSGVLQALI…IGYGLSGIQT (283 aa). Residues 351–371 are Periplasmic-facing; the sequence is LVELARLLLGGAEAERLWTLG. Residues 372–392 form a helical membrane-spanning segment; sequence LTAVSLIGLGAVLAAAMTLWL. At 393 to 444 the chain is on the cytoplasmic side; the sequence is HRVDARFAHELRGRLLTKLSRLPLGWFTRRGSASTKQLVQDDTLALHYLITH. Residues 445–465 form a helical membrane-spanning segment; sequence AIPDAVAAVVAPVAVLVYLFV. Residues 466–469 lie on the Periplasmic side of the membrane; that stretch reads ADWR. The helical transmembrane segment at 470–490 threads the bilayer; that stretch reads VALVLFIPVLVYLVLMSVMTI. Residues 491–557 are Cytoplasmic-facing; sequence QSGSKIAQAP…PFVGKKTLMD (67 aa). A helical membrane pass occupies residues 558-578; the sequence is LVTRPATFLWIILVAGVPLVV. The Periplasmic segment spans residues 579–586; that stretch reads TGRMDPVN. Residues 587–607 form a helical membrane-spanning segment; sequence LLPFLLLGTTFGARLLGIGYG. The Cytoplasmic segment spans residues 608 to 908; the sequence is LSGIQTGMLA…VSADAVEVGR (301 aa). The ABC transporter domain maps to 654-887; the sequence is VELDRVSFEY…GGRYRGLWDS (234 aa). ATP is bound at residue 687–694; the sequence is GPSGSGKS.

Belongs to the ABC transporter superfamily. Siderophore-Fe(3+) uptake transporter (SIUT) (TC 3.A.1.21) family. As to quaternary structure, forms a heterodimer with IrtB. Requires FAD as cofactor.

It is found in the cell inner membrane. The ATPase activity of IrtAB is stimulated more than 38-fold in the presence of Fe-MBT, and more than 10-fold in the presence of Fe-cMBT. In terms of biological role, part of the ABC transporter complex IrtAB involved in the import of iron-bound mycobactin (Fe-MBT) and carboxymycobactin (Fe-cMBT). Has a preference for Fe-MBT over Fe-cMBT. Mycobactins are then reduced by the siderophore interaction domain to facilitate iron release in the bacterial cell. Transmembrane domains (TMD) form a pore in the membrane and the ATP-binding domain (NBD) is responsible for energy generation. In Mycolicibacterium thermoresistibile (strain ATCC 19527 / DSM 44167 / CIP 105390 / JCM 6362 / NCTC 10409 / 316) (Mycobacterium thermoresistibile), this protein is Mycobactin import ATP-binding/permease protein IrtA.